Consider the following 502-residue polypeptide: ATP synthase subunit alpha (502 aa).

169-176 serves as a coordination point for ATP; the sequence is GDKQTGKT.

The protein belongs to the ATPase alpha/beta chains family. As to quaternary structure, F-type ATPases have 2 components, CF(1) - the catalytic core - and CF(0) - the membrane proton channel. CF(1) has five subunits: alpha(3), beta(3), gamma(1), delta(1), epsilon(1). CF(0) has three main subunits: a(1), b(2) and c(9-12). The alpha and beta chains form an alternating ring which encloses part of the gamma chain. CF(1) is attached to CF(0) by a central stalk formed by the gamma and epsilon chains, while a peripheral stalk is formed by the delta and b chains.

It is found in the cell membrane. It catalyses the reaction ATP + H2O + 4 H(+)(in) = ADP + phosphate + 5 H(+)(out). In terms of biological role, produces ATP from ADP in the presence of a proton gradient across the membrane. The alpha chain is a regulatory subunit. The sequence is that of ATP synthase subunit alpha from Lachnoclostridium phytofermentans (strain ATCC 700394 / DSM 18823 / ISDg) (Clostridium phytofermentans).